Here is a 37-residue protein sequence, read N- to C-terminus: Cytochrome b6-f complex subunit 5 (37 aa).

A helical membrane pass occupies residues 5–25 (FLFGIVLGLIPITLAGLFVTA).

This sequence belongs to the PetG family. As to quaternary structure, the 4 large subunits of the cytochrome b6-f complex are cytochrome b6, subunit IV (17 kDa polypeptide, PetD), cytochrome f and the Rieske protein, while the 4 small subunits are PetG, PetL, PetM and PetN. The complex functions as a dimer.

It is found in the plastid. The protein resides in the chloroplast thylakoid membrane. Component of the cytochrome b6-f complex, which mediates electron transfer between photosystem II (PSII) and photosystem I (PSI), cyclic electron flow around PSI, and state transitions. PetG is required for either the stability or assembly of the cytochrome b6-f complex. In Solanum lycopersicum (Tomato), this protein is Cytochrome b6-f complex subunit 5.